The sequence spans 268 residues: MAAVRVLVASRLAAASAFTSLSPGGRTPSQRAALHLSVPRPAARVALVLSGCGVYDGTEIHEASAILVHLSRGGAEVQIFAPDVPQMHVIDHTKGQPSEGESRNVLTESARIARGKITDLANLSAANHDAAIFPGGFGAAKNLSTFAVDGKDCKVNKEVERVLKEFHQAGKPIGLCCIAPVLAAKVLRGVEVTVGHEQEEGGKWPYAGTAEAIKALGAKHCVKEVVEAHVDQKNKVVTTPAFMCETALHYIHDGIGAMVRKVLELTGK.

A mitochondrion-targeting transit peptide spans 1-41 (MAAVRVLVASRLAAASAFTSLSPGGRTPSQRAALHLSVPRP). 3 positions are modified to N6-acetyllysine: lysine 151, lysine 157, and lysine 164. The residue at position 203 (lysine 203) is an N6-acetyllysine; alternate. Position 203 is an N6-succinyllysine; alternate (lysine 203). At lysine 219 the chain carries N6-acetyllysine. An N6-acetyllysine; alternate mark is found at lysine 223 and lysine 233. Residues lysine 223 and lysine 233 each carry the N6-succinyllysine; alternate modification.

Belongs to the GATD3 family.

Its subcellular location is the mitochondrion. The protein is Glutamine amidotransferase-like class 1 domain-containing protein 3, mitochondrial of Homo sapiens (Human).